The primary structure comprises 226 residues: 7-cyano-7-deazaguanine synthase (226 aa).

11 to 21 (LSGGLDSATCL) provides a ligand contact to ATP. Positions 191, 201, 204, and 207 each coordinate Zn(2+).

Belongs to the QueC family. Zn(2+) is required as a cofactor.

It carries out the reaction 7-carboxy-7-deazaguanine + NH4(+) + ATP = 7-cyano-7-deazaguanine + ADP + phosphate + H2O + H(+). Its pathway is purine metabolism; 7-cyano-7-deazaguanine biosynthesis. Functionally, catalyzes the ATP-dependent conversion of 7-carboxy-7-deazaguanine (CDG) to 7-cyano-7-deazaguanine (preQ(0)). This Aromatoleum aromaticum (strain DSM 19018 / LMG 30748 / EbN1) (Azoarcus sp. (strain EbN1)) protein is 7-cyano-7-deazaguanine synthase.